A 188-amino-acid polypeptide reads, in one-letter code: Elongation factor P (188 aa).

The protein belongs to the elongation factor P family.

Its subcellular location is the cytoplasm. It functions in the pathway protein biosynthesis; polypeptide chain elongation. In terms of biological role, involved in peptide bond synthesis. Stimulates efficient translation and peptide-bond synthesis on native or reconstituted 70S ribosomes in vitro. Probably functions indirectly by altering the affinity of the ribosome for aminoacyl-tRNA, thus increasing their reactivity as acceptors for peptidyl transferase. The chain is Elongation factor P from Leptospira borgpetersenii serovar Hardjo-bovis (strain JB197).